A 90-amino-acid chain; its full sequence is MPEVFIGKKPLTNYVMAVVMQFMQGANEVVIKARGRNISRAVDVAERVRKRFLAGQVDVGDIKIDSEEVVDPATGQKRTVSTIEIKLVKK.

Position 8 is an N6-acetyllysine (lysine 8).

Belongs to the histone-like Alba family. Acetylated. Acetylation at Lys-8 decreases DNA-binding affinity.

Its subcellular location is the cytoplasm. The protein resides in the chromosome. In terms of biological role, binds double-stranded DNA tightly but without sequence specificity. Involved in DNA compaction. This chain is DNA/RNA-binding protein Alba, found in Nanoarchaeum equitans (strain Kin4-M).